Reading from the N-terminus, the 330-residue chain is CRISPR-associated endonuclease Cas1 2 (330 aa).

Mn(2+) contacts are provided by glutamate 156, histidine 222, and glutamate 237.

This sequence belongs to the CRISPR-associated endonuclease Cas1 family. In terms of assembly, homodimer, forms a heterotetramer with a Cas2 homodimer. The cofactor is Mg(2+). Mn(2+) is required as a cofactor.

Functionally, CRISPR (clustered regularly interspaced short palindromic repeat), is an adaptive immune system that provides protection against mobile genetic elements (viruses, transposable elements and conjugative plasmids). CRISPR clusters contain spacers, sequences complementary to antecedent mobile elements, and target invading nucleic acids. CRISPR clusters are transcribed and processed into CRISPR RNA (crRNA). Acts as a dsDNA endonuclease. Involved in the integration of spacer DNA into the CRISPR cassette. The chain is CRISPR-associated endonuclease Cas1 2 from Thermodesulfovibrio yellowstonii (strain ATCC 51303 / DSM 11347 / YP87).